The primary structure comprises 466 residues: Argininosuccinate lyase (466 aa).

Ser27, Asn114, and Thr159 together coordinate 2-(N(omega)-L-arginino)succinate. His160 acts as the Proton acceptor in catalysis. The Proton donor role is filled by Ser281. 2-(N(omega)-L-arginino)succinate contacts are provided by Asn289, Tyr321, Gln326, and Lys329.

It belongs to the lyase 1 family. Argininosuccinate lyase subfamily. Homotetramer. Eye lens.

The catalysed reaction is 2-(N(omega)-L-arginino)succinate = fumarate + L-arginine. It functions in the pathway amino-acid biosynthesis; L-arginine biosynthesis; L-arginine from L-ornithine and carbamoyl phosphate: step 3/3. Delta crystallin, the principal crystallin in embryonic lens, is found only in birds and reptiles. This protein also functions as an enzymatically active argininosuccinate lyase. In Anser anser anser (Western greylag goose), this protein is Argininosuccinate lyase (ASL).